A 207-amino-acid chain; its full sequence is ATP-dependent dethiobiotin synthetase BioD (207 aa).

An ATP-binding site is contributed by 13 to 18; that stretch reads EVGKTV. Thr17 contributes to the Mg(2+) binding site. The active site involves Lys33. ATP contacts are provided by residues Asp44 and 100 to 103; that span reads EGAG. Mg(2+) contacts are provided by Asp44 and Glu100.

The protein belongs to the dethiobiotin synthetase family. In terms of assembly, homodimer. Requires Mg(2+) as cofactor.

The protein resides in the cytoplasm. The catalysed reaction is (7R,8S)-7,8-diammoniononanoate + CO2 + ATP = (4R,5S)-dethiobiotin + ADP + phosphate + 3 H(+). The protein operates within cofactor biosynthesis; biotin biosynthesis; biotin from 7,8-diaminononanoate: step 1/2. In terms of biological role, catalyzes a mechanistically unusual reaction, the ATP-dependent insertion of CO2 between the N7 and N8 nitrogen atoms of 7,8-diaminopelargonic acid (DAPA, also called 7,8-diammoniononanoate) to form a ureido ring. This Christiangramia forsetii (strain DSM 17595 / CGMCC 1.15422 / KT0803) (Gramella forsetii) protein is ATP-dependent dethiobiotin synthetase BioD.